A 488-amino-acid polypeptide reads, in one-letter code: Ribulose bisphosphate carboxylase large chain (488 aa).

2 residues coordinate substrate: asparagine 127 and threonine 177. The active-site Proton acceptor is the lysine 179. Position 181 (lysine 181) interacts with substrate. Mg(2+)-binding residues include lysine 205, aspartate 207, and glutamate 208. Lysine 205 carries the post-translational modification N6-carboxylysine. The Proton acceptor role is filled by histidine 297. Substrate contacts are provided by arginine 298, histidine 330, and serine 382.

Belongs to the RuBisCO large chain family. Type I subfamily. As to quaternary structure, heterohexadecamer of 8 large chains and 8 small chains. The cofactor is Mg(2+).

The protein localises to the plastid. It is found in the chloroplast. The enzyme catalyses 2 (2R)-3-phosphoglycerate + 2 H(+) = D-ribulose 1,5-bisphosphate + CO2 + H2O. The catalysed reaction is D-ribulose 1,5-bisphosphate + O2 = 2-phosphoglycolate + (2R)-3-phosphoglycerate + 2 H(+). Its function is as follows. RuBisCO catalyzes two reactions: the carboxylation of D-ribulose 1,5-bisphosphate, the primary event in carbon dioxide fixation, as well as the oxidative fragmentation of the pentose substrate in the photorespiration process. Both reactions occur simultaneously and in competition at the same active site. The protein is Ribulose bisphosphate carboxylase large chain of Cyanidium caldarium (Red alga).